The sequence spans 320 residues: ATP-dependent 6-phosphofructokinase (320 aa).

Glycine 12 serves as a coordination point for ATP. Residues 22 to 26 (RGVVR) and 55 to 60 (RYSVSD) each bind ADP. Residues 73–74 (RF) and 103–106 (GDGS) each bind ATP. Aspartate 104 lines the Mg(2+) pocket. Residue 126–128 (TID) coordinates substrate. The Proton acceptor role is filled by aspartate 128. ADP is bound at residue arginine 155. Residues arginine 163 and 170–172 (MGR) contribute to the substrate site. ADP-binding positions include 186–188 (GCE), lysine 212, and 214–216 (KKH). Substrate is bound by residues glutamate 223, arginine 244, and 250-253 (HIQR).

It belongs to the phosphofructokinase type A (PFKA) family. ATP-dependent PFK group I subfamily. Prokaryotic clade 'B1' sub-subfamily. As to quaternary structure, homotetramer. Mg(2+) is required as a cofactor.

Its subcellular location is the cytoplasm. It catalyses the reaction beta-D-fructose 6-phosphate + ATP = beta-D-fructose 1,6-bisphosphate + ADP + H(+). It functions in the pathway carbohydrate degradation; glycolysis; D-glyceraldehyde 3-phosphate and glycerone phosphate from D-glucose: step 3/4. Allosterically activated by ADP and other diphosphonucleosides, and allosterically inhibited by phosphoenolpyruvate. Functionally, catalyzes the phosphorylation of D-fructose 6-phosphate to fructose 1,6-bisphosphate by ATP, the first committing step of glycolysis. In Serratia proteamaculans (strain 568), this protein is ATP-dependent 6-phosphofructokinase.